The following is a 240-amino-acid chain: uncharacterized protein (240 aa).

Disordered stretches follow at residues 125–148 and 177–240; these read RRLD…EDVD and DESN…RKSR. Positions 130 to 148 are enriched in acidic residues; the sequence is SSEDGEEEEENDYIDEDVD. Over residues 192–203 the composition is skewed to basic and acidic residues; the sequence is SPRKSHIDHDFV. Residues 204–217 are compositionally biased toward acidic residues; sequence IPEDEMLSEEEEQE. S231 carries the phosphoserine modification.

This sequence belongs to the UTP5 family.

It is found in the cytoplasm. Its subcellular location is the nucleus. This is an uncharacterized protein from Schizosaccharomyces pombe (strain 972 / ATCC 24843) (Fission yeast).